Here is a 484-residue protein sequence, read N- to C-terminus: 6-phosphogluconate dehydrogenase, decarboxylating (484 aa).

NADP(+)-binding positions include 10–15 (GLAVMG), 33–35 (NRT), 75–77 (IKA), and asparagine 103. Substrate-binding positions include asparagine 103 and 129–131 (SGG). The active-site Proton acceptor is the lysine 183. 186–187 (HN) contributes to the substrate binding site. Residue glutamate 190 is the Proton donor of the active site. 5 residues coordinate substrate: tyrosine 191, lysine 260, arginine 287, arginine 448, and histidine 454.

It belongs to the 6-phosphogluconate dehydrogenase family. As to quaternary structure, homodimer.

The catalysed reaction is 6-phospho-D-gluconate + NADP(+) = D-ribulose 5-phosphate + CO2 + NADPH. The protein operates within carbohydrate degradation; pentose phosphate pathway; D-ribulose 5-phosphate from D-glucose 6-phosphate (oxidative stage): step 3/3. Its function is as follows. Catalyzes the oxidative decarboxylation of 6-phosphogluconate to ribulose 5-phosphate and CO(2), with concomitant reduction of NADP to NADPH. The protein is 6-phosphogluconate dehydrogenase, decarboxylating of Caenorhabditis elegans.